A 222-amino-acid chain; its full sequence is Probable pyridoxal 5'-phosphate synthase subunit SNO3 (222 aa).

L-glutamine is bound at residue Gly-58 to Ser-60. Cys-91 (nucleophile) is an active-site residue. L-glutamine contacts are provided by residues Arg-120 and Ile-151–Arg-152. Active-site charge relay system residues include His-197 and Glu-199.

It belongs to the glutaminase PdxT/SNO family.

The catalysed reaction is aldehydo-D-ribose 5-phosphate + D-glyceraldehyde 3-phosphate + L-glutamine = pyridoxal 5'-phosphate + L-glutamate + phosphate + 3 H2O + H(+). It carries out the reaction L-glutamine + H2O = L-glutamate + NH4(+). It participates in cofactor biosynthesis; pyridoxal 5'-phosphate biosynthesis. Its function is as follows. Catalyzes the hydrolysis of glutamine to glutamate and ammonia as part of the biosynthesis of pyridoxal 5'-phosphate. The resulting ammonia molecule is channeled to the active site of a SNZ isoform. The chain is Probable pyridoxal 5'-phosphate synthase subunit SNO3 (SNO3) from Saccharomyces cerevisiae (strain ATCC 204508 / S288c) (Baker's yeast).